The chain runs to 1106 residues: Solute carrier family 12 member 7 (1106 aa).

Over 1 to 143 (MVYTALTWQR…PRESKAPCMG (143 aa)) the chain is Cytoplasmic. Residues 17 to 83 (GLVPSHLPQE…SPFIGSAAAD (67 aa)) are disordered. Phosphoserine is present on residues serine 74 and serine 86. Residues 144–166 (TFIGVYLPCLQNILGVILFLRLT) form a discontinuously helical membrane-spanning segment. K(+) is bound by residues asparagine 155 and isoleucine 156. Valine 159 is a binding site for chloride. Residues 167-173 (WIVGAAG) are Extracellular-facing. A helical transmembrane segment spans residues 174-196 (VLESFLVVSMCCTCTMLTAVSMS). Residues 197-220 (AIATNGVVPAGGSYYMISRSLGPE) are Cytoplasmic-facing. The helical transmembrane segment at 221–249 (FGGAVGLCFYLGTTFAGAMYILGTIEIFL) threads the bilayer. Topologically, residues 250-273 (TYISPGAAVFQAETPEGEAAALLH) are extracellular. 2 helical membrane-spanning segments follow: residues 274–295 (NMRV…VGVK) and 296–324 (YVNK…KTAF). The Extracellular segment spans residues 325 to 443 (DPPDIPVCLL…PYVLSDITTY (119 aa)). 3 N-linked (GlcNAc...) asparagine glycosylation sites follow: asparagine 336, asparagine 355, and asparagine 384. Residues 444 to 464 (FTVLVGIYFPSVTGIMAGSNR) form a helical membrane-spanning segment. Residues proline 453 and threonine 456 each coordinate K(+). Residue proline 453 participates in chloride binding. Positions 457 and 458 each coordinate chloride. The Cytoplasmic portion of the chain corresponds to 465 to 474 (SGDLKDAQKS). A helical membrane pass occupies residues 475 to 497 (IPTGTILAIVTTSFIYLSCIVLF). Residues 498–528 (GACIEGVVLRDKFGEALQGNLVIGMLAWPSP) are Extracellular-facing. A helical membrane pass occupies residues 529–555 (WVIVIGSFFSTCGAGLQSLTGAPRLLQ). At 556-578 (AIARDGIVPFLQVFGHGKANGEP) the chain is on the cytoplasmic side. The next 2 membrane-spanning stretches (helical) occupy residues 579–597 (TWAL…LIAS) and 598–622 (LDSV…ACAV). Tyrosine 613 contacts chloride. Topologically, residues 623-636 (QTLLRTPNWRPRFK) are cytoplasmic. 2 consecutive transmembrane segments (helical) span residues 637 to 659 (YYHW…ICSW) and 660 to 675 (YYAL…IYKY). Residues 676-1106 (IEYRGAEKEW…GGREVITIYS (431 aa)) lie on the Cytoplasmic side of the membrane. The interval 688-704 (GIRGLSLNAARYALLRV) is scissor helix. The interval 980–999 (RNTASHTAASRAQAPPTPDK) is disordered. Residues threonine 996 and threonine 1003 each carry the phosphothreonine modification.

The protein belongs to the SLC12A transporter family. K/Cl co-transporter subfamily. In terms of assembly, homodimer; adopts a domain-swap conformation at the scissor helices connecting the transmembrane domain and C-terminal domain. Heterodimer with K-Cl cotransporter SLC12A5. As to expression, widely expressed. Higher levels in heart, kidney and lung (at protein level).

The protein localises to the cell membrane. The catalysed reaction is K(+)(in) + chloride(in) = K(+)(out) + chloride(out). Its activity is regulated as follows. Activated by N-ethylmaleimide (NEM). Inhibited by furosemide, DIDS and bumetanide. The inhibition is much stronger in the presence of 50 mM K(+) in the uptake medium. Inhibited by DIOA. Inhibited by WNK3. Functionally, mediates electroneutral potassium-chloride cotransport when activated by cell swelling. May mediate K(+) uptake into Deiters' cells in the cochlea and contribute to K(+) recycling in the inner ear. Important for the survival of cochlear outer and inner hair cells and the maintenance of the organ of Corti. May be required for basolateral Cl(-) extrusion in the kidney and contribute to renal acidification. In Oryctolagus cuniculus (Rabbit), this protein is Solute carrier family 12 member 7.